The following is a 268-amino-acid chain: Zinc transporter ZupT (268 aa).

5 helical membrane passes run 6–26, 37–57, 70–90, 125–145, and 152–172; these read LAFL…LIAF, SFAL…DIFF, TQGY…IGFI, GLFT…ATFV, and SIGL…GIAV. Residues Asn136 and Glu139 each coordinate Fe(2+). Zn(2+)-binding residues include Glu139 and His164. The Fe(2+) site is built by Asn165, Glu168, and Glu197. Glu168 is a binding site for Zn(2+). 2 helical membrane-spanning segments follow: residues 201–221 and 248–268; these read AIVA…GIIF and MSMY…LLLA.

Belongs to the ZIP transporter (TC 2.A.5) family. ZupT subfamily.

Its subcellular location is the cell membrane. It catalyses the reaction Zn(2+)(in) = Zn(2+)(out). Mediates zinc uptake. May also transport other divalent cations. The sequence is that of Zinc transporter ZupT from Oceanobacillus iheyensis (strain DSM 14371 / CIP 107618 / JCM 11309 / KCTC 3954 / HTE831).